We begin with the raw amino-acid sequence, 98 residues long: Ferredoxin-like protein (98 aa).

It to ferredoxins from P.putida and C.tartarivorum, ferredoxin I from A.vinelandii, ferredoxin II from D.desulfuricans.

Could be a 3Fe-4S cluster-containing protein. The sequence is that of Ferredoxin-like protein (fixX) from Rhizobium leguminosarum.